The primary structure comprises 1360 residues: DNA-directed RNA polymerase subunit beta (1360 aa).

This sequence belongs to the RNA polymerase beta chain family. As to quaternary structure, the RNAP catalytic core consists of 2 alpha, 1 beta, 1 beta' and 1 omega subunit. When a sigma factor is associated with the core the holoenzyme is formed, which can initiate transcription.

It catalyses the reaction RNA(n) + a ribonucleoside 5'-triphosphate = RNA(n+1) + diphosphate. Its function is as follows. DNA-dependent RNA polymerase catalyzes the transcription of DNA into RNA using the four ribonucleoside triphosphates as substrates. The sequence is that of DNA-directed RNA polymerase subunit beta from Vesicomyosocius okutanii subsp. Calyptogena okutanii (strain HA).